The sequence spans 260 residues: Alpha-acetolactate decarboxylase (260 aa).

This sequence belongs to the alpha-acetolactate decarboxylase family.

The catalysed reaction is (2S)-2-acetolactate + H(+) = (R)-acetoin + CO2. It functions in the pathway polyol metabolism; (R,R)-butane-2,3-diol biosynthesis; (R,R)-butane-2,3-diol from pyruvate: step 2/3. Functionally, converts acetolactate into acetoin. The protein is Alpha-acetolactate decarboxylase (budA) of Methylococcus capsulatus (strain ATCC 33009 / NCIMB 11132 / Bath).